A 549-amino-acid polypeptide reads, in one-letter code: Glucose-6-phosphate isomerase (549 aa).

The active-site Proton donor is the Glu353. Catalysis depends on residues His384 and Lys512.

Belongs to the GPI family.

It localises to the cytoplasm. It carries out the reaction alpha-D-glucose 6-phosphate = beta-D-fructose 6-phosphate. It functions in the pathway carbohydrate biosynthesis; gluconeogenesis. Its pathway is carbohydrate degradation; glycolysis; D-glyceraldehyde 3-phosphate and glycerone phosphate from D-glucose: step 2/4. Its function is as follows. Catalyzes the reversible isomerization of glucose-6-phosphate to fructose-6-phosphate. In Solidesulfovibrio magneticus (strain ATCC 700980 / DSM 13731 / RS-1) (Desulfovibrio magneticus), this protein is Glucose-6-phosphate isomerase.